The sequence spans 42 residues: CLGENVPCDKDRPNCCSKYECLEPTGYGRCYASYYSYKKKTL.

3 cysteine pairs are disulfide-bonded: Cys-1/Cys-16, Cys-8/Cys-21, and Cys-15/Cys-30.

The protein belongs to the neurotoxin 14 (magi-1) family. 08 (Ltx-4) subfamily. Expressed by the venom gland.

It localises to the secreted. Inhibits voltage-gated calcium channels (Cav) in rat cerebellar granule cells. The chain is Omega-theraphotoxin-Asp3a from Aphonopelma sp. (American tarantula).